A 435-amino-acid chain; its full sequence is Serine--tRNA ligase (435 aa).

Residue 237 to 239 (TAE) participates in L-serine binding. 268-270 (RSE) contributes to the ATP binding site. Glu-291 contacts L-serine. 355–358 (EISS) contributes to the ATP binding site. L-serine is bound at residue Ser-390.

Belongs to the class-II aminoacyl-tRNA synthetase family. Type-1 seryl-tRNA synthetase subfamily. As to quaternary structure, homodimer. The tRNA molecule binds across the dimer.

The protein localises to the cytoplasm. The enzyme catalyses tRNA(Ser) + L-serine + ATP = L-seryl-tRNA(Ser) + AMP + diphosphate + H(+). The catalysed reaction is tRNA(Sec) + L-serine + ATP = L-seryl-tRNA(Sec) + AMP + diphosphate + H(+). It participates in aminoacyl-tRNA biosynthesis; selenocysteinyl-tRNA(Sec) biosynthesis; L-seryl-tRNA(Sec) from L-serine and tRNA(Sec): step 1/1. Its function is as follows. Catalyzes the attachment of serine to tRNA(Ser). Is also able to aminoacylate tRNA(Sec) with serine, to form the misacylated tRNA L-seryl-tRNA(Sec), which will be further converted into selenocysteinyl-tRNA(Sec). In Lactobacillus delbrueckii subsp. bulgaricus (strain ATCC BAA-365 / Lb-18), this protein is Serine--tRNA ligase.